Consider the following 206-residue polypeptide: N-(5'-phosphoribosyl)anthranilate isomerase (206 aa).

This sequence belongs to the TrpF family.

The catalysed reaction is N-(5-phospho-beta-D-ribosyl)anthranilate = 1-(2-carboxyphenylamino)-1-deoxy-D-ribulose 5-phosphate. It functions in the pathway amino-acid biosynthesis; L-tryptophan biosynthesis; L-tryptophan from chorismate: step 3/5. In Azotobacter vinelandii (strain DJ / ATCC BAA-1303), this protein is N-(5'-phosphoribosyl)anthranilate isomerase.